The primary structure comprises 317 residues: Beta-ketoacyl-[acyl-carrier-protein] synthase III (317 aa).

Residues Cys112 and His244 contribute to the active site. The interval Gln245–Arg249 is ACP-binding. Residue Asn274 is part of the active site.

It belongs to the thiolase-like superfamily. FabH family. In terms of assembly, homodimer.

It is found in the cytoplasm. It carries out the reaction malonyl-[ACP] + acetyl-CoA + H(+) = 3-oxobutanoyl-[ACP] + CO2 + CoA. It functions in the pathway lipid metabolism; fatty acid biosynthesis. Catalyzes the condensation reaction of fatty acid synthesis by the addition to an acyl acceptor of two carbons from malonyl-ACP. Catalyzes the first condensation reaction which initiates fatty acid synthesis and may therefore play a role in governing the total rate of fatty acid production. Possesses both acetoacetyl-ACP synthase and acetyl transacylase activities. Its substrate specificity determines the biosynthesis of branched-chain and/or straight-chain of fatty acids. In Salmonella typhi, this protein is Beta-ketoacyl-[acyl-carrier-protein] synthase III.